Here is a 452-residue protein sequence, read N- to C-terminus: MDTPRVLLWAIFLISFLWDLPGFQQASISSSSSTELDSTKDVENRKGGKMQRTPQESAEGRTPKEHRPRPNELRRRLPGQSLGQEPPGRGPRVVPHEYMLSIYRTYSIAEKLGINASFFQSSKSANTITSFVDRGLDDLSHTPLRRQKYLFDVSTLSDKEELVGAELRLYRQAPPTPWGPQTRPLHLQLFPCLSPLLLDSRTLDPQGPTEAGWEVFDVWQVLRPQPWKQLCLELRAVWGELDARDSGARPRGPQQSPPLDLRSLGFGRRVRPPQERALLVVFTRSQRKNLFTEMHEQLGSAEAAGAEGSWPAPSGAPDAGSWLPSPGRRRRRTALSSRHGKRHGKKSRLRCSRKPLHVNFKELGWDDWIIAPLEYEAYHCEGVCDFPLRSHLEPTNHAIIQTLMNSMDPGSTPPSCCVPTKLTPISILYIDAGNNVVYKQYEDMVVESCGCR.

A signal peptide spans 1-22 (MDTPRVLLWAIFLISFLWDLPG). Residues 23–332 (FQQASISSSS…LPSPGRRRRR (310 aa)) constitute a propeptide that is removed on maturation. Positions 29 to 93 (SSSSSTELDS…QEPPGRGPRV (65 aa)) are disordered. 2 stretches are compositionally biased toward basic and acidic residues: residues 37-46 (DSTKDVENRK) and 58-75 (AEGR…ELRR). Asn115 is a glycosylation site (N-linked (GlcNAc...) asparagine). Disordered stretches follow at residues 244–267 (RDSG…LGFG) and 301–348 (AEAA…KKSR). Residues 301–317 (AEAAGAEGSWPAPSGAP) are compositionally biased toward low complexity. A compositionally biased stretch (basic residues) spans 327–348 (GRRRRRTALSSRHGKRHGKKSR). Disulfide bonds link Cys351–Cys417, Cys380–Cys449, and Cys384–Cys451.

This sequence belongs to the TGF-beta family. As to quaternary structure, homodimer; disulfide-linked.

The protein resides in the secreted. Growth factor that controls proliferation and cellular differentiation in the retina and bone formation. Plays a key role in regulating apoptosis during retinal development. Establishes dorsal-ventral positional information in the retina and controls the formation of the retinotectal map. Required for normal formation of bones and joints in the limbs, skull, digits and axial skeleton. Plays a key role in establishing boundaries between skeletal elements during development. Regulation of GDF6 expression seems to be a mechanism for evolving species-specific changes in skeletal structures. Seems to positively regulate differentiation of chondrogenic tissue through the growth factor receptors subunits BMPR1A, BMPR1B, BMPR2 and ACVR2A, leading to the activation of SMAD1-SMAD5-SMAD8 complex. The regulation of chondrogenic differentiation is inhibited by NOG. Also involved in the induction of adipogenesis from mesenchymal stem cells. This mechanism acts through the growth factor receptors subunits BMPR1A, BMPR2 and ACVR2A and the activation of SMAD1-SMAD5-SMAD8 complex and MAPK14/p38. This is Growth/differentiation factor 6 (Gdf6) from Rattus norvegicus (Rat).